The sequence spans 260 residues: Small ribosomal subunit protein eS1 (260 aa).

Residues 1 to 18 (MAVGKNKRMSKGKKGGKK) are compositionally biased toward basic residues. Residues 1–20 (MAVGKNKRMSKGKKGGKKKA) form a disordered region.

Belongs to the eukaryotic ribosomal protein eS1 family. Component of the small ribosomal subunit. Mature ribosomes consist of a small (40S) and a large (60S) subunit. The 40S subunit contains about 33 different proteins and 1 molecule of RNA (18S). The 60S subunit contains about 49 different proteins and 3 molecules of RNA (25S, 5.8S and 5S).

The protein resides in the cytoplasm. The chain is Small ribosomal subunit protein eS1 from Ostreococcus lucimarinus (strain CCE9901).